The primary structure comprises 223 residues: MGQKVNPTGIRLGYIKDWSSRWFADSKSYPVFLNNDLKVREFLKQKLKHASVSRIQINRLANNAQITIHTARPGIVIGKRGEDIDALRRDVSRFMGVPVQVSVEEIRKPELDAQLVAEGVAQQLEKRIMFRRAMKRAVQNTLRVGAEGIKISVAGRLNGAEIARTEWYREGRVPLHTFRADIDYGFAEAVTTYGVIGVKVWIFKGEVFEPVHTEPKTRSAVEA.

Residues V39–R107 form the KH type-2 domain.

It belongs to the universal ribosomal protein uS3 family. Part of the 30S ribosomal subunit. Forms a tight complex with proteins S10 and S14.

Its function is as follows. Binds the lower part of the 30S subunit head. Binds mRNA in the 70S ribosome, positioning it for translation. In Methylococcus capsulatus (strain ATCC 33009 / NCIMB 11132 / Bath), this protein is Small ribosomal subunit protein uS3.